The sequence spans 482 residues: MASFSAETNSTDLLSQPWNEPPVILSMVILSLTFLLGLPGNGLVLWVAGLKMQRTVNTIWFLHLTLADLLCCLSLPFSLAHLALQGQWPYGRFLCKLIPSIIVLNMFASVFLLTAISLDRCLVVFKPIWCQNHRNVGMACSICGCIWVVAFVMCIPVFVYREIFTTDNHNRCGYKFGLSSSLDYPDFYGDPLENRSLENIVQPPGEMNDRLDPSSFQTNDHPWTVPTVFQPQTFQRPSADSLPRGSARLTSQNLYSNVFKPADVVSPKIPSGFPIEDHETSPLDNSDAFLSTHLKLFPSASSNSFYESELPQGFQDYYNLGQFTDDDQVPTPLVAITITRLVVGFLLPSVIMIACYSFIVFRMQRGRFAKSQSKTFRVAVVVVAVFLVCWTPYHIFGVLSLLTDPETPLGKTLMSWDHVCIALASANSCFNPFLYALLGKDFRKKARQSIQGILEAAFSEELTRSTHCPSNNVISERNSTTV.

The Extracellular portion of the chain corresponds to 1–23; sequence MASFSAETNSTDLLSQPWNEPPV. Residue Asn9 is glycosylated (N-linked (GlcNAc...) asparagine). The chain crosses the membrane as a helical span at residues 24–46; that stretch reads ILSMVILSLTFLLGLPGNGLVLW. At 47 to 57 the chain is on the cytoplasmic side; that stretch reads VAGLKMQRTVN. The chain crosses the membrane as a helical span at residues 58–80; sequence TIWFLHLTLADLLCCLSLPFSLA. The Extracellular portion of the chain corresponds to 81–96; sequence HLALQGQWPYGRFLCK. A disulfide bond links Cys95 and Cys172. A helical membrane pass occupies residues 97-118; the sequence is LIPSIIVLNMFASVFLLTAISL. At 119-139 the chain is on the cytoplasmic side; the sequence is DRCLVVFKPIWCQNHRNVGMA. A helical transmembrane segment spans residues 140–160; it reads CSICGCIWVVAFVMCIPVFVY. The Extracellular portion of the chain corresponds to 161–340; it reads REIFTTDNHN…TPLVAITITR (180 aa). 2 positions are modified to sulfotyrosine: Tyr174 and Tyr184. A glycan (N-linked (GlcNAc...) asparagine) is linked at Asn194. A glycan (O-linked (GalNAc...) serine) is linked at Ser266. At Tyr318 the chain carries Sulfotyrosine. The helical transmembrane segment at 341–360 threads the bilayer; it reads LVVGFLLPSVIMIACYSFIV. The Cytoplasmic segment spans residues 361–377; the sequence is FRMQRGRFAKSQSKTFR. A helical membrane pass occupies residues 378-400; the sequence is VAVVVVAVFLVCWTPYHIFGVLS. Over 401–417 the chain is Extracellular; sequence LLTDPETPLGKTLMSWD. A helical membrane pass occupies residues 418–438; that stretch reads HVCIALASANSCFNPFLYALL. At 439-482 the chain is on the cytoplasmic side; it reads GKDFRKKARQSIQGILEAAFSEELTRSTHCPSNNVISERNSTTV. At Ser459 the chain carries Phosphoserine. Phosphothreonine is present on Thr463.

The protein belongs to the G-protein coupled receptor 1 family. As to quaternary structure, interacts with VGF-derived peptide TLQP-21. In terms of processing, among the sulfation sites Tyr-174 is essential for binding of C3a anaphylatoxin. Post-translationally, O-glycosylated. Widely expressed in several differentiated hematopoietic cell lines, in the lung, spleen, ovary, placenta, small intestine, throughout the brain, heart, and endothelial cells. Mostly expressed in lymphoid tissues.

It is found in the cell membrane. Its function is as follows. Receptor for the chemotactic and inflammatory peptide anaphylatoxin C3a. This receptor stimulates chemotaxis, granule enzyme release and superoxide anion production. The chain is C3a anaphylatoxin chemotactic receptor (C3AR1) from Homo sapiens (Human).